The following is a 241-amino-acid chain: Outer membrane protein A (241 aa).

5 beta stranded membrane passes run 1–8, 13–21, 46–55, 60–67, and 86–94; these read LTAKLSYP, LDIYTRLGG, PVFAGGVEYA, IATRLEYQ, and MLSVGVSYR. Repeat copies occupy residues 105 to 106, 107 to 108, 109 to 110, and 111 to 112. The segment at 105 to 112 is 4 X 2 AA tandem repeats of A-P; that stretch reads APAPAPAP. One can recognise an OmpA-like domain in the interval 114 to 241; it reads VQTKHFTLKS…RRVEIEVKGV (128 aa). Cys-215 and Cys-227 are oxidised to a cystine.

This sequence belongs to the outer membrane OOP (TC 1.B.6) superfamily. OmpA family. In terms of assembly, monomer and homodimer.

It is found in the cell outer membrane. With TolR probably plays a role in maintaining the position of the peptidoglycan cell wall in the periplasm. Acts as a porin with low permeability that allows slow penetration of small solutes; an internal gate slows down solute passage. This is Outer membrane protein A from Shimwellia blattae (Escherichia blattae).